Reading from the N-terminus, the 92-residue chain is 10 kDa late embryogenesis abundant protein (92 aa).

Residues 1 to 10 show a composition bias toward polar residues; the sequence is MASQQGQQTR. The interval 1 to 92 is disordered; the sequence is MASQQGQQTR…GEREEEEEED (92 aa). Basic and acidic residues-rich tracts occupy residues 11–26 and 38–71; these read KIPEQEKKDLDQRAAK and KSLEAQERLAEGRSKGGQTRKDQLGTEGYKEMGK.

The protein belongs to the small hydrophilic plant seed protein family. Maximally expressed in dry seeds. Also present in mid-maturation embryos.

Functionally, LEA proteins are late embryonic proteins abundant in higher plant seed embryos. They may play an essential role in seed survival and in controlling water exchanges during seed desiccation and imbibition. In Helianthus annuus (Common sunflower), this protein is 10 kDa late embryogenesis abundant protein.